The following is a 303-amino-acid chain: Ferrochelatase (303 aa).

Fe cation is bound by residues His185 and Glu262.

The protein belongs to the ferrochelatase family.

It is found in the cytoplasm. The catalysed reaction is heme b + 2 H(+) = protoporphyrin IX + Fe(2+). The protein operates within porphyrin-containing compound metabolism; protoheme biosynthesis; protoheme from protoporphyrin-IX: step 1/1. Functionally, catalyzes the ferrous insertion into protoporphyrin IX. This is Ferrochelatase from Campylobacter jejuni subsp. jejuni serotype O:2 (strain ATCC 700819 / NCTC 11168).